A 429-amino-acid chain; its full sequence is GTPase Obg (429 aa).

The Obg domain maps to 1-158 (MFVDQVKIYV…RNVQLELKVL (158 aa)). Residues 124-145 (RGNKRFATPANPAPELSENGEP) form a disordered region. Positions 159 to 329 (ADVGLVGFPS…LLLAIADKLE (171 aa)) constitute an OBG-type G domain. Residues 165–172 (GFPSVGKS), 190–194 (FTTIV), 212–215 (DLPG), 282–285 (NKMD), and 310–312 (SAV) contribute to the GTP site. Residues Ser-172 and Thr-192 each contribute to the Mg(2+) site. One can recognise an OCT domain in the interval 351 to 429 (KYVADEPDFE…LLDYEFEFMD (79 aa)).

Belongs to the TRAFAC class OBG-HflX-like GTPase superfamily. OBG GTPase family. In terms of assembly, monomer. The cofactor is Mg(2+).

Its subcellular location is the cytoplasm. An essential GTPase which binds GTP, GDP and possibly (p)ppGpp with moderate affinity, with high nucleotide exchange rates and a fairly low GTP hydrolysis rate. Plays a role in control of the cell cycle, stress response, ribosome biogenesis and in those bacteria that undergo differentiation, in morphogenesis control. This Listeria monocytogenes serotype 4a (strain HCC23) protein is GTPase Obg.